Reading from the N-terminus, the 552-residue chain is Non-structural protein NS1 (552 aa).

It belongs to the orbivirus non-structural protein NS1 family.

In Antilocapra americana (Pronghorn), this protein is Non-structural protein NS1 (Segment-5).